A 694-amino-acid chain; its full sequence is Cyclic nucleotide-gated channel alpha-3 (694 aa).

Polar residues-rich tracts occupy residues 1–11 (MAKINTQYSHP) and 112–123 (SQESNAQANVGS). 2 disordered regions span residues 1-24 (MAKI…SDRD) and 109-152 (EVSS…EEKK). At 1–170 (MAKINTQYSH…VDPSSNLYYR (170 aa)) the chain is on the cytoplasmic side. Residues 171–192 (WLTAIALPVFYNWYLLICRACF) form a helical membrane-spanning segment. Residues 193 to 198 (DELQSE) lie on the Extracellular side of the membrane. A helical membrane pass occupies residues 199–219 (YLMLWLVLDYSADVLYVLDVL). Over 220-246 (VRARTGFLEQGLMVSDTNRLWQHYKTT) the chain is Cytoplasmic. Residues 247–266 (TQFKLDVLSLVPTDLAYLKV) traverse the membrane as a helical segment. Residues 267–270 (GTNY) lie on the Extracellular side of the membrane. Residues 271–288 (PEVRFNRLLKFSRLFEFF) form a helical membrane-spanning segment. The Cytoplasmic segment spans residues 289–298 (DRTETRTNYP). Positions 298-406 (PNMFRIGNLV…GNVGSMISNM (109 aa)) are ion conduction pathway. A helical transmembrane segment spans residues 299–321 (NMFRIGNLVLYILIIIHWNACIY). The Extracellular portion of the chain corresponds to 322–347 (FAISKFIGFGTDSWVYPNISIPEHGR). A glycan (N-linked (GalNAc...) asparagine) is linked at Asn339. 2 helical membrane passes run 348–378 (LSRK…DEEY) and 379–403 (LFVV…GSMI). Residues 365 to 368 (TIGE) form a selectivity filter region. Residues 404–694 (SNMNASRAEF…DATKTEDKQQ (291 aa)) are Cytoplasmic-facing. Positions 408–485 (ASRAEFQAKI…TLKKVRIFQD (78 aa)) are C-linker. Positions 488-608 (AGLLVELVLK…EEKGRQILMK (121 aa)) are cyclic nucleotide-binding domain. 3',5'-cyclic GMP is bound by residues Gly548, Glu549, Ser551, Arg564, Thr565, and Asp609. The stretch at 626–669 (LEEKVEQLGSSLDTLQTRFARLLAEYNATQMKMKQRLSQLESQV) forms a coiled coil. Residues 662–694 (LSQLESQVKGGGDKPLADGEVPGDATKTEDKQQ) form a disordered region.

Belongs to the cyclic nucleotide-gated cation channel (TC 1.A.1.5) family. CNGA3 subfamily. In terms of assembly, forms heterotetrameric channels composed of CNGA3 and CNGB3 subunits with 3:1 stoichiometry. Prominently expressed in retina.

The protein resides in the cell membrane. The enzyme catalyses Ca(2+)(in) = Ca(2+)(out). It catalyses the reaction Na(+)(in) = Na(+)(out). It carries out the reaction K(+)(in) = K(+)(out). The catalysed reaction is NH4(+)(in) = NH4(+)(out). The enzyme catalyses Rb(+)(in) = Rb(+)(out). It catalyses the reaction Li(+)(in) = Li(+)(out). It carries out the reaction Cs(+)(in) = Cs(+)(out). Its activity is regulated as follows. Inhibited by L-cis-diltiazem. Its function is as follows. Pore-forming subunit of the cone cyclic nucleotide-gated channel. Mediates cone photoresponses at bright light converting transient changes in intracellular cGMP levels into electrical signals. In the dark, cGMP levels are high and keep the channel open enabling a steady inward current carried by Na(+) and Ca(2+) ions that leads to membrane depolarization and neurotransmitter release from synaptic terminals. Upon photon absorption cGMP levels decline leading to channel closure and membrane hyperpolarization that ultimately slows neurotransmitter release and signals the presence of light, the end point of the phototransduction cascade. Pore-forming subunit of the gustatory cyclic nucleotide-gated channel. In the taste buds, may sense oral extracellular pH and conduct ion currents that modulate the excitability of taste cells. Conducts cGMP- and cAMP-gated ion currents, with permeability for monovalent and divalent cations. The polypeptide is Cyclic nucleotide-gated channel alpha-3 (Homo sapiens (Human)).